The chain runs to 160 residues: Cytochrome b6-f complex subunit 4 (160 aa).

The next 3 helical transmembrane spans lie at 36–56 (LLYIPPVVIPGTIACTVGLAV), 95–115 (LLGVLLMAAVPAGLLVVPFPE), and 131–151 (TVFSAGTAVAPWLGIGAALPI).

This sequence belongs to the cytochrome b family. PetD subfamily. As to quaternary structure, the 4 large subunits of the cytochrome b6-f complex are cytochrome b6, subunit IV (17 kDa polypeptide, petD), cytochrome f and the Rieske protein, while the 4 small subunits are petG, petL, petM and petN. The complex functions as a dimer.

The protein resides in the plastid. It localises to the chloroplast thylakoid membrane. Functionally, component of the cytochrome b6-f complex, which mediates electron transfer between photosystem II (PSII) and photosystem I (PSI), cyclic electron flow around PSI, and state transitions. In Huperzia lucidula (Shining clubmoss), this protein is Cytochrome b6-f complex subunit 4.